We begin with the raw amino-acid sequence, 273 residues long: Homeobox protein Nkx-2.2 (273 aa).

2 disordered regions span residues 1–56 (MSLT…LDAV) and 90–131 (LAAG…KRKR). The span at 20–38 (DTNDEEGSVAEGPEEENEG) shows a compositional bias: acidic residues. A DNA-binding region (homeobox) is located at residues 128–187 (KRKRRVLFSKAQTYELERRFRQQRYLSAPEREHLASLIRLTPTQVKIWFQNHRYKMKRAR).

This sequence belongs to the NK-2 homeobox family. In terms of assembly, interacts with OLIG2.

The protein resides in the nucleus. Functionally, transcriptional activator involved in the development of insulin-producting beta cells in the endocrine pancreas. May also be involved in specifying diencephalic neuromeric boundaries, and in controlling the expression of genes that play a role in axonal guidance. Binds to elements within the NEUROD1 promoter. The protein is Homeobox protein Nkx-2.2 (NKX2-2) of Homo sapiens (Human).